The following is a 366-amino-acid chain: MPSATPVIPSQQTAIVAEGAGQLSIYHDAPVPALQPDVALVKTAAVAINPVDAKMLDYSPVPGAIHGYDFAGTIVALGSDTPPHLKVGDRVAGFVHGMNPLLPDVGAFAEYVAASADLVLKLPDTMSFEEGASLGLGLFTAGLGLFQHLQIPLSLTREPSPEASSPTKADFVLVAGGSTATGTRALQLLKLAGLRPVATCSPAHFDLARRFGAEAVFDYHDPDCAAAIRAYTKNTLAYALDCLALAETTQLCYGALGRAGGRYVTLEPFREAIAAQRPHTVTPSWLLALTIFGRKVALDGEYGREANPEDREFGARLTEQVQGLLDEGKVDVHPVRVMGGGWQGVLEGVDLVRRQTVSGHKLVYAV.

In terms of domain architecture, Enoyl reductase (ER) spans 19–363 (GAGQLSIYHD…RQTVSGHKLV (345 aa)). Residue tyrosine 219 coordinates NADP(+).

The protein belongs to the zinc-containing alcohol dehydrogenase family. In terms of assembly, monomer.

It participates in secondary metabolite biosynthesis. Functionally, trans-enoyl reductase; part of the gene cluster that produces the acyltetronic acid derivatives carlosic acid, agglomerin F and carlosic acid methyl ether. The PKS domains of caaA condenses two malonyl-CoAs into an acetyl starter unit, and form 1,3-diketohexanyl-ACP with the help of the trans-enoyl reductase caaB. Next, the C domain of caaA forms the ester bond between the acyl chain and L-malic acid (derived from the TCA cycle) and accepted by the A domain instead of an amino acid. Finally, the terminal reductase/Dieckmann cyclization (R/DKC) domain cyclizes the intermediate and releases the product as carlosic acid. Decarboxylation of carlosic acid followed by formation of the exocyclic double bond is likely to be catalyzed by the cytochrome P450 monooxygenase caaC. Thus, decarboxylation and oxidation would be coupled (performed by one enzyme) through concomitant abstraction of the hydrogen at C-4. Finally, sequential oxidations of the terminal C-10 methyl group to form carboxylic acid would be catalyzed by the 2-oxoglutarate-dependent dioxygenase caaD, which is required for the biosynthesis of agglomerin F. This chain is Trans-enoyl reductase caaB, found in Aspergillus niger (strain ATCC MYA-4892 / CBS 513.88 / FGSC A1513).